The chain runs to 430 residues: Putative FBD-associated F-box protein At5g56440 (430 aa).

One can recognise an F-box domain in the interval methionine 1–proline 49. The FBD domain maps to glutamine 349–serine 399.

The protein is Putative FBD-associated F-box protein At5g56440 of Arabidopsis thaliana (Mouse-ear cress).